The primary structure comprises 620 residues: MDSHTLMQALIYLGSAALIVPIAVRLGLGSVLGYLIAGCIIGPWGLRLVTDAESILHFAEIGVVLMLFVIGLELDPQRLWKLRASVFGGGALQMVICGGLIGFFCMFLGLRWQVAELIGMTLALSSTAIAMQAMNERNLTVSQVGRSAFAVLLFQDIAAIPLVAMIPLLAASGASTTLGAFALSALKVAGALALVVLLGRYVTRPALRFVARSGLREVFSAVALFLVFGFGLLLEEVGLSMAMGAFLAGVLLASSEYRHALESDIEPFKGLLLGLFFIGVGMSIDFGTLVDNPLRILLLLAGFLAIKIVMLWLIARPLGVPAKQRRWFAVLLGQGSEFAFVVFGAAQMADVLEPEWAKALTLAVALSMAATPIFLVLLTRMEKAATGEAREADEIDEEQPRVIVAGFGRFGQIAGRLLLSSGVKMVVLDHDPDHIETLRKFGMKVFYGDATRMDLLESAGAAKAEVLINAIDDPQTNLQLSELVKTHFPHLQIIARARDVDHYIRLRQAGVAMPERETFESALKSGRQALEALGLGRYEARERADLFRHFNTQMVEEMAKGENDPLSRAAAYKRTSAMLSEIITEDREHLSLIQRHGWQGTAEGKHTGDIADEPQVKPST.

12 helical membrane-spanning segments follow: residues 4–24, 26–46, 54–74, 90–110, 114–134, 149–169, 178–198, 218–238, 270–290, 294–314, 327–347, and 359–379; these read HTLM…PIAV, LGLG…PWGL, SILH…GLEL, GALQ…FLGL, VAEL…MQAM, FAVL…IPLL, LGAF…VVLL, VFSA…EEVG, GLLL…GTLV, LRIL…LWLI, WFAV…GAAQ, and ALTL…VLLT. The RCK N-terminal domain occupies 399–518; that stretch reads QPRVIVAGFG…AGVAMPERET (120 aa). The disordered stretch occupies residues 599–620; sequence QGTAEGKHTGDIADEPQVKPST.

This sequence belongs to the monovalent cation:proton antiporter 2 (CPA2) transporter (TC 2.A.37) family. KefC subfamily. In terms of assembly, homodimer. Interacts with the regulatory subunit KefF.

It localises to the cell inner membrane. In terms of biological role, pore-forming subunit of a potassium efflux system that confers protection against electrophiles. Catalyzes K(+)/H(+) antiport. This is Glutathione-regulated potassium-efflux system protein KefC from Salmonella arizonae (strain ATCC BAA-731 / CDC346-86 / RSK2980).